A 644-amino-acid chain; its full sequence is Probable potassium transport system protein Kup (644 aa).

Transmembrane regions (helical) follow at residues 10–30 (GGAT…GDIG), 56–76 (ILSL…AWVI), 106–126 (WWIL…GVIT), 143–163 (PAWK…LFMV), 175–195 (FGPS…TWIV), 212–232 (FFGI…LAVT), 252–272 (AWYF…GALL), 282–302 (PFFM…SGIA), 343–363 (IYLP…ILWF), 371–391 (FAYG…VFFV), 403–423 (AGLF…ANLL), and 425–445 (FVEG…TMST).

Belongs to the HAK/KUP transporter (TC 2.A.72) family.

The protein resides in the cell inner membrane. The enzyme catalyses K(+)(in) + H(+)(in) = K(+)(out) + H(+)(out). Transport of potassium into the cell. Likely operates as a K(+):H(+) symporter. This chain is Probable potassium transport system protein Kup, found in Acidithiobacillus ferrooxidans (strain ATCC 23270 / DSM 14882 / CIP 104768 / NCIMB 8455) (Ferrobacillus ferrooxidans (strain ATCC 23270)).